Consider the following 419-residue polypeptide: Histidine--tRNA ligase (419 aa).

The protein belongs to the class-II aminoacyl-tRNA synthetase family. Homodimer.

It is found in the cytoplasm. The enzyme catalyses tRNA(His) + L-histidine + ATP = L-histidyl-tRNA(His) + AMP + diphosphate + H(+). This is Histidine--tRNA ligase from Novosphingobium aromaticivorans (strain ATCC 700278 / DSM 12444 / CCUG 56034 / CIP 105152 / NBRC 16084 / F199).